The sequence spans 243 residues: Thaumatin-like protein (243 aa).

The signal sequence occupies residues 1–20; it reads MASINLFLFAFLLLLSHASA. 8 disulfide bridges follow: cysteine 29–cysteine 238, cysteine 77–cysteine 87, cysteine 92–cysteine 98, cysteine 144–cysteine 228, cysteine 149–cysteine 211, cysteine 157–cysteine 174, cysteine 178–cysteine 187, and cysteine 188–cysteine 198.

Belongs to the thaumatin family.

This is Thaumatin-like protein from Arabidopsis thaliana (Mouse-ear cress).